The chain runs to 120 residues: Seminal plasma protein HSP-1 (120 aa).

2 consecutive repeat copies span residues 1–13 and 16–28. The 2 X approximate repeats stretch occupies residues 1–28; it reads DLQTTGADHSATVNPDQQLIMTKHSATV. Threonine 5, threonine 12, threonine 22, and threonine 27 each carry an O-linked (GalNAc...) threonine glycan. Fibronectin type-II domains follow at residues 29-73 and 74-120; these read TPEN…YCAA and TDYA…WKYC. 4 cysteine pairs are disulfide-bonded: cysteine 34–cysteine 58, cysteine 48–cysteine 71, cysteine 79–cysteine 105, and cysteine 93–cysteine 120.

The protein belongs to the seminal plasma protein family. One glycoform exists as a monomer while the other forms a heterotetramer with HSP-2 and binds heparin. Post-translationally, O-glycosylated on Thr. There are two forms of HSP-1 which probably differ in the amount of sialylation of polysaccharide. Major component of seminal plasma.

It localises to the secreted. Could enhance the fertilizing capacity of spermatozoa upon interaction with heparin-like glycosaminoglycans present in the female genital tract. This chain is Seminal plasma protein HSP-1, found in Equus caballus (Horse).